Consider the following 292-residue polypeptide: UPF0696 protein C11orf68 (292 aa).

Positions 1–11 (MAAAAAAAVAG) are enriched in low complexity. A disordered region spans residues 1-60 (MAAAAAAAVAGVGRGGGGAEPRQERSRARGWAGVERSEGRRMEPGEELEEEGSPGGREDG). Arg29 carries the post-translational modification Omega-N-methylarginine. Basic and acidic residues predominate over residues 35-44 (ERSEGRRMEP).

Belongs to the UPF0696 family.

The protein is UPF0696 protein C11orf68 (C11orf68) of Homo sapiens (Human).